Here is a 229-residue protein sequence, read N- to C-terminus: Apoptosis regulator Bcl-2 (229 aa).

The BH4 motif lies at 10–30; it reads DNREIVMKYIHYKLSQRGYEW. Residues 30–82 are disordered; the sequence is WDAGDAGAAPPGAAPAPGILSSQPGRTPAPSRTSPPPPPAAAAGPAPSPVPPV. The segment covering 33–61 has biased composition (low complexity); the sequence is GDAGAAPPGAAPAPGILSSQPGRTPAPSR. Position 62 is a phosphothreonine; by MAPK8 (Thr62). Residues 62–81 are compositionally biased toward pro residues; it reads TSPPPPPAAAAGPAPSPVPP. Position 63 is a phosphoserine; by MAPK8 and PKC (Ser63). At Ser77 the chain carries Phosphoserine; by MAPK8. Residues 83–97 carry the BH3 motif; the sequence is VHLTLRQAGDDFSRR. The BH1 signature appears at 126-145; the sequence is ELFRDGVNWGRIVAFFEFGG. The short motif at 177–192 is the BH2 element; it reads TWIQDNGGWDAFVELY. The helical transmembrane segment at 202–223 threads the bilayer; sequence FSWLSLKALLSLALVGACITLG.

It belongs to the Bcl-2 family. In terms of assembly, forms homodimers, and heterodimers with BAX, BAD, BAK and Bcl-X(L). Heterodimerization with BAX requires intact BH1 and BH2 motifs, and is necessary for anti-apoptotic activity. Component of the complex, at least composed of LRPPRC, BECN1 and BCL2; the interactions prevent BECN1 from forming an autophagy-inducing complex with PIK3C3. Interacts with EI24. Also interacts with APAF1, BBC3, BCL2L1, BNIPL, MRPL41 and TP53BP2. Binding to FKBP8 seems to target BCL2 to the mitochondria and probably interferes with the binding of BCL2 to its targets. Interacts with BAG1 in an ATP-dependent manner. Interacts with RAF1 (the 'Ser-338' and 'Ser-339' phosphorylated form). Interacts (via the BH4 domain) with EGLN3; the interaction prevents the formation of the BAX-BCL2 complex and inhibits the anti-apoptotic activity of BCL2. Interacts with G0S2; this interaction also prevents the formation of the anti-apoptotic BAX-BCL2 complex. Interacts with RTL10/BOP. Interacts with the SCF(FBXO10) complex. Interacts (via the loop between motifs BH4 and BH3) with NLRP1 (via LRR repeats), but not with NLRP2, NLRP3, NLRP4, PYCARD, nor MEFV. Interacts with GIMAP3/IAN4, GIMAP4/IAN1 and GIMAP5/IAN5. Interacts with BCAP31. Interacts with IRF3; the interaction is inhibited by Sendai virus infection. Interacts with BECN1; thereby inhibiting autophagy in non-starvation conditions. Interacts with AMBRA1; thereby inhibiting autophagy. Post-translationally, phosphorylation/dephosphorylation on Ser-63 regulates anti-apoptotic activity. Growth factor-stimulated phosphorylation on Ser-63 by PKC is required for the anti-apoptosis activity and occurs during the G2/M phase of the cell cycle. In the absence of growth factors, BCL2 appears to be phosphorylated by other protein kinases such as ERKs and stress-activated kinases. Phosphorylated by MAPK8/JNK1 at Thr-62, Ser-63 and Ser-77, which stimulates starvation-induced autophagy. Dephosphorylated by protein phosphatase 2A (PP2A). Proteolytically cleaved by caspases during apoptosis. The cleaved protein, lacking the BH4 motif, has pro-apoptotic activity, causes the release of cytochrome c into the cytosol promoting further caspase activity. In terms of processing, monoubiquitinated by PRKN, leading to an increase in its stability. Ubiquitinated by SCF(FBXO10), leading to its degradation by the proteasome.

It is found in the mitochondrion outer membrane. The protein resides in the nucleus membrane. The protein localises to the endoplasmic reticulum membrane. Its subcellular location is the cytoplasm. Functionally, suppresses apoptosis in a variety of cell systems including factor-dependent lymphohematopoietic and neural cells. Regulates cell death by controlling the mitochondrial membrane permeability. Appears to function in a feedback loop system with caspases. Inhibits caspase activity either by preventing the release of cytochrome c from the mitochondria and/or by binding to the apoptosis-activating factor (APAF-1). Also acts as an inhibitor of autophagy: interacts with BECN1 and AMBRA1 during non-starvation conditions and inhibits their autophagy function. May attenuate inflammation by impairing NLRP1-inflammasome activation, hence CASP1 activation and IL1B release. This chain is Apoptosis regulator Bcl-2 (BCL2), found in Bos taurus (Bovine).